The following is a 255-amino-acid chain: 5-oxoprolinase subunit A (255 aa).

The protein belongs to the LamB/PxpA family. In terms of assembly, forms a complex composed of PxpA, PxpB and PxpC.

It catalyses the reaction 5-oxo-L-proline + ATP + 2 H2O = L-glutamate + ADP + phosphate + H(+). In terms of biological role, catalyzes the cleavage of 5-oxoproline to form L-glutamate coupled to the hydrolysis of ATP to ADP and inorganic phosphate. The chain is 5-oxoprolinase subunit A from Rhodopseudomonas palustris (strain BisB18).